We begin with the raw amino-acid sequence, 609 residues long: Protein kinase PVPK-1 (609 aa).

The segment covering 1-19 (MESSVNGVDSLSEVQNSVS) has biased composition (polar residues). Disordered regions lie at residues 1-51 (MESS…GHQT) and 80-100 (PTKL…EPNG). The region spanning 229-565 (FRLLKKLGCG…ATEIKQHPFF (337 aa)) is the Protein kinase domain. ATP contacts are provided by residues 235–243 (LGCGDIGSV) and K258. The active-site Proton acceptor is the D354. A disordered region spans residues 429-448 (GKSKKDKKSKPKNDMHNQVT).

Belongs to the protein kinase superfamily. Ser/Thr protein kinase family.

The catalysed reaction is L-seryl-[protein] + ATP = O-phospho-L-seryl-[protein] + ADP + H(+). It carries out the reaction L-threonyl-[protein] + ATP = O-phospho-L-threonyl-[protein] + ADP + H(+). The polypeptide is Protein kinase PVPK-1 (Phaseolus vulgaris (Kidney bean)).